A 247-amino-acid chain; its full sequence is Adiponectin (247 aa).

Positions Met1–Ala17 are cleaved as a signal peptide. O-linked (GalNAc...) threonine glycans are attached at residues Thr23 and Thr24. Position 36 is a 5-hydroxylysine (Lys36). The residue at position 39 (Cys39) is an S-(2-succinyl)cysteine. The disordered stretch occupies residues Ala44–Gly105. A Collagen-like domain is found at Gly45 to Ala110. A 4-hydroxyproline mark is found at Pro47, Pro50, and Pro56. The span at Arg58 to Asp73 shows a compositional bias: basic and acidic residues. 5-hydroxylysine; alternate occurs at positions 68, 71, and 80. O-linked (Gal...) hydroxylysine; alternate glycans are attached at residues Lys68, Lys71, and Lys80. Position 94 is a 4-hydroxyproline (Pro94). A 5-hydroxylysine; alternate modification is found at Lys104. O-linked (Gal...) hydroxylysine; alternate glycosylation occurs at Lys104. In terms of domain architecture, C1q spans Ala111–Asn247.

Homomultimer. Forms trimers, hexamers and 12- to 18-mers. The trimers (low molecular weight complexes / LMW) are assembled via non-covalent interactions of the collagen-like domains in a triple helix and hydrophobic interactions within the globular C1q domain. Several trimers can associate to form disulfide-linked hexamers (middle molecular weight complexes / MMW) and larger complexes (higher molecular weight / HMW). The HMW-complex assembly is also modulated by the degree of lysine hydroxylation and glycosylation. LMW, MMW and HMW complexes bind to HBEGF, MMW and HMW complexes bind to PDGFB, and HMW complex binds to FGF2. Interacts with CTRP9 via the C1q domain (heterotrimeric complex). Post-translationally, HMW complexes are more extensively glycosylated than smaller oligomers. Hydroxylation and glycosylation of the lysine residues within the collagen-like domain of adiponectin seem to be critically involved in regulating the formation and/or secretion of HMW complexes and consequently contribute to the insulin-sensitizing activity of adiponectin in hepatocytes. O-glycosylated. Not N-glycosylated O-linked glycans on hydroxylysine residues consist of Glc-Gal disaccharides bound to the oxygen atom of post-translationally added hydroxyl groups. O-linked glycosylation in the N-terminal is disialylated with the structure Neu5Acalpha2-&gt;8Neu5Acalpha2-&gt;3Gal. Sialylated by alpha 2,8-sialyltransferase III. In terms of processing, succination of Cys-39 by the Krebs cycle intermediate fumarate, which leads to S-(2-succinyl)cysteine residues, inhibits polymerization and secretion of adiponectin. Adiponectin is a major target for succination in both adipocytes and adipose tissue of diabetic mice. It was proposed that succination of proteins is a biomarker of mitochondrial stress and accumulation of Krebs cycle intermediates in adipose tissue in diabetes and that succination of adiponectin may contribute to the decrease in plasma adiponectin in diabetes. Synthesized exclusively by adipocytes and secreted into plasma.

It is found in the secreted. Polymerization and secretion of adiponectin is inhibited by succination of cysteine residues by the Krebs cycle intermediate fumarate, which leads to S-(2-succinyl)cysteine residues. Functionally, important adipokine involved in the control of fat metabolism and insulin sensitivity, with direct anti-diabetic, anti-atherogenic and anti-inflammatory activities. Stimulates AMPK phosphorylation and activation in the liver and the skeletal muscle, enhancing glucose utilization and fatty-acid combustion. Antagonizes TNF-alpha by negatively regulating its expression in various tissues such as liver and macrophages, and also by counteracting its effects. Inhibits endothelial NF-kappa-B signaling through a cAMP-dependent pathway. May play a role in cell growth, angiogenesis and tissue remodeling by binding and sequestering various growth factors with distinct binding affinities, depending on the type of complex, LMW, MMW or HMW. This chain is Adiponectin (Adipoq), found in Mus musculus (Mouse).